The chain runs to 471 residues: Uronate isomerase (471 aa).

It belongs to the metallo-dependent hydrolases superfamily. Uronate isomerase family.

The enzyme catalyses D-glucuronate = D-fructuronate. The catalysed reaction is aldehydo-D-galacturonate = keto-D-tagaturonate. It participates in carbohydrate metabolism; pentose and glucuronate interconversion. This chain is Uronate isomerase, found in Cellvibrio japonicus (strain Ueda107) (Pseudomonas fluorescens subsp. cellulosa).